The following is a 510-amino-acid chain: GMP synthase [glutamine-hydrolyzing] (510 aa).

One can recognise a Glutamine amidotransferase type-1 domain in the interval 5 to 194 (DILVLDFGSQ…FAKICGCEST (190 aa)). Residue Cys82 is the Nucleophile of the active site. Catalysis depends on residues His169 and Glu171. The GMPS ATP-PPase domain maps to 195 to 385 (WNMGSFAKKE…LGLSRDIVYR (191 aa)). An ATP-binding site is contributed by 222–228 (SGGVDSS).

In terms of assembly, homodimer.

It catalyses the reaction XMP + L-glutamine + ATP + H2O = GMP + L-glutamate + AMP + diphosphate + 2 H(+). It functions in the pathway purine metabolism; GMP biosynthesis; GMP from XMP (L-Gln route): step 1/1. Catalyzes the synthesis of GMP from XMP. The polypeptide is GMP synthase [glutamine-hydrolyzing] (Campylobacter fetus subsp. fetus (strain 82-40)).